The primary structure comprises 255 residues: Syntaxin-6 (255 aa).

Residue S2 is modified to N-acetylserine. Residue S2 is modified to Phosphoserine. A required for interaction with VPS51 region spans residues 2–168 (SMEDPFFVVK…QAQQQLIVEQ (167 aa)). Residues 2–234 (SMEDPFFVVK…VSHMTSDRRQ (233 aa)) lie on the Cytoplasmic side of the membrane. A coiled-coil region spans residues 41 to 74 (EEIDWTTNELRNNLRSIEWDLEDLDETISIVEAN). Phosphoserine is present on residues S129 and S152. One can recognise a t-SNARE coiled-coil homology domain in the interval 163-225 (QLIVEQQDEQ…DNVMKKLAKV (63 aa)). The helical; Anchor for type IV membrane protein transmembrane segment at 235–255 (WCAIAILFAVLVVVLILFLVL) threads the bilayer.

The protein belongs to the syntaxin family. As to quaternary structure, identified in a complex containing STX6, STX12 and VAMP4. This complex also includes VTI1A. Binds EEA1. Interacts with VPS45A and GOPC. Interacts with MARCHF2; the interaction promotes MARCHF2-mediated ubiquitination and degradation of CFTR. Interacts with MARCHF3. Interacts with BLTP3B (via C-terminal coiled-coil domain). Interacts with BAIAP3; this interaction is increased in the presence of calcium. Interacts with VPS13B.

Its subcellular location is the golgi apparatus membrane. The protein resides in the golgi apparatus. It localises to the trans-Golgi network membrane. The protein localises to the recycling endosome membrane. Functionally, SNARE promoting movement of transport vesicles to target membranes. Targets endosomes to the trans-Golgi network, and may therefore function in retrograde trafficking. Together with SNARE STX12, promotes movement of vesicles from endosomes to the cell membrane, and may therefore function in the endocytic recycling pathway. This is Syntaxin-6 (Stx6) from Mus musculus (Mouse).